Reading from the N-terminus, the 68-residue chain is Large ribosomal subunit protein bL35 (68 aa).

The disordered stretch occupies residues 29–68 (GGVSHYNTKKSSKRKRQGRKPQYVPKNLEHKVKALLPNDV). Basic residues predominate over residues 35–47 (NTKKSSKRKRQGR).

This sequence belongs to the bacterial ribosomal protein bL35 family.

In Sulfurihydrogenibium sp. (strain YO3AOP1), this protein is Large ribosomal subunit protein bL35.